A 527-amino-acid polypeptide reads, in one-letter code: MASISTTTWLYRGQVCTDSGKSSNCIVQRRVKCGFPLKTLHAGITSRDRSLRHCIKCKKEDGDGDVSEGSKKSEEGFEYVTVERHPYHSYMDSTSGKLEPASGARASIPGEDYWPEGTSSRVRAARAPQPAGESSSFPSYGKNPGSRRKKNRKATEENVTVETNDEVSDSEDSSEEEENDSSDGFVTYKNEFEREEEETGFELDKKLGRPHPFIDPTKKKQIEKTLTSDESWWNWRKPEKEQWSRWQRRRPDVETVFLKAMAETGQVKLYGEEPTLTETSLYRARRHLFKEERLQAERERLAKEGPMAFYSEWVKAWKRDTSREAVQKHFEETGEDENTQLIEMFSHQTDREYRIMMGTDIRIKRDPLAMRMREDQIKQIWGGDPVYPTINYIQDPNAVMDFRGPDFHEPTPNMLSYLKENGKVISREMHEALLTKEKTEQLEVPDMDDAMAQAVDIGENDDDEDDADVEKDDEKVPRNWSVLKETPELRTAKPKPKKEGRMSLDEAVDDAENLTDFLMDFEEETDP.

A chloroplast-targeting transit peptide spans 1 to 30 (MASISTTTWLYRGQVCTDSGKSSNCIVQRR). Residues 1–115 (MASISTTTWL…ASIPGEDYWP (115 aa)) are PHYA-interacting region 1 (PIR1). Residues 89–188 (SYMDSTSGKL…NDSSDGFVTY (100 aa)) are disordered. A compositionally biased stretch (acidic residues) spans 163-181 (TNDEVSDSEDSSEEEENDS). 2 short sequence motifs (nuclear localization signal) span residues 204 to 211 (DKKLGRPH) and 235 to 242 (WRKPEKEQ). The tract at residues 252-352 (DVETVFLKAM…EMFSHQTDRE (101 aa)) is PHYA-interacting region 2 (PIR2). The span at 458–471 (GENDDDEDDADVEK) shows a compositional bias: acidic residues. Positions 458–527 (GENDDDEDDA…LMDFEEETDP (70 aa)) are disordered. Residues 485 to 504 (ETPELRTAKPKPKKEGRMSL) show a composition bias toward basic and acidic residues. A compositionally biased stretch (acidic residues) spans 506–527 (EAVDDAENLTDFLMDFEEETDP). Residues 512 to 520 (ENLTDFLMD) carry the Required and sufficient for transcriptional transactivation activity and to trigger PIF proteins degradation motif.

In terms of assembly, component of the transcriptionally active chromosome (TAC) complexes. Interacts with PTAC14 and PTAC7. Binds directly to PTAC6/PAP8 in the nucleus. Interacts with MED14. Binds to SL1/MTERF3. Binds to photoactivated phytochromes (e.g. PHYA and PHYB) via their photosensory domains; these interactions stimulate its light-mediated accumulation. Associates, via its N-terminal region, with phytochrome-interacting factors (PIFs) including PIF1, PIF3, PIF4, PIF5, PIF6, BHLH72/PIF7, UNE10/PIF8 and PIL1. Binds to RAD4. Associates with MRL7/RCB. As to expression, mostly expressed in cotyledons, leaves, stems and flowers, but barely in roots.

The protein resides in the plastid. The protein localises to the chloroplast. It localises to the nucleus. Functionally, involved in plastid gene expression. Acidic transcriptional coactivator necessary for the transactivation of many PIFs target genes (class B genes), particularly during the regulation of hypocotyl growth. Plays dual opposite roles in regulating hypocotyl growth, preventing it in red and far-red conditions, but promoting it otherwise. Required in the nucleus for the initiation of photomorphogenesis mediated by phytochromes (PHYs) (e.g. PHYA and PHYB) by mediating PHYs localization to photobodies, especially in response to red and far-red light, and implicating phytochrome nuclear bodies as sites of proteolysis for PHYs and PIFs proteins (e.g. PIF1 and PIF3). Acts downstream of PHYs and upstream of DET1. Involved in UV tolerance in both roots and hypocotyls, specifically in dark conditions. Element of a PIF4/HMR/MED14-dependent thermoresponsive process; acts as a PIF4 transcriptional coactivator to trigger the thermoresponsive growth-relevant genes (e.g. mainly involved in biosynthesis and signaling of the phytohormone auxin) and promote warm-temperature-dependent (e.g. 27 degrees Celsius) PIF4 and MED14 stabilization and accumulation, being more prominently involved in long days (LD) and continuous red light (Rc) than in short days (SD), thus modulating warm temperature elicitation of MED14-dependent thermomorphogenesis (e.g. hypocotyl elongation). The protein is Protein PLASTID TRANSCRIPTIONALLY ACTIVE 12, chloroplastic of Arabidopsis thaliana (Mouse-ear cress).